The chain runs to 506 residues: Lysine--tRNA ligase (506 aa).

E416 and E423 together coordinate Mg(2+).

This sequence belongs to the class-II aminoacyl-tRNA synthetase family. As to quaternary structure, homodimer. Mg(2+) serves as cofactor.

Its subcellular location is the cytoplasm. It catalyses the reaction tRNA(Lys) + L-lysine + ATP = L-lysyl-tRNA(Lys) + AMP + diphosphate. The protein is Lysine--tRNA ligase of Bordetella bronchiseptica (strain ATCC BAA-588 / NCTC 13252 / RB50) (Alcaligenes bronchisepticus).